We begin with the raw amino-acid sequence, 466 residues long: Ribulose bisphosphate carboxylase large chain (466 aa).

Lys5 bears the N6,N6,N6-trimethyllysine mark. Substrate contacts are provided by Asn114 and Thr164. Lys166 acts as the Proton acceptor in catalysis. A substrate-binding site is contributed by Lys168. Mg(2+) is bound by residues Lys192, Asp194, and Glu195. Lys192 carries the N6-carboxylysine modification. His285 functions as the Proton acceptor in the catalytic mechanism. Residues Arg286, His318, and Ser370 each contribute to the substrate site.

It belongs to the RuBisCO large chain family. Type I subfamily. In terms of assembly, heterohexadecamer of 8 large chains and 8 small chains; disulfide-linked. The disulfide link is formed within the large subunit homodimers. Requires Mg(2+) as cofactor. The disulfide bond which can form in the large chain dimeric partners within the hexadecamer appears to be associated with oxidative stress and protein turnover.

It localises to the plastid. Its subcellular location is the chloroplast. The catalysed reaction is 2 (2R)-3-phosphoglycerate + 2 H(+) = D-ribulose 1,5-bisphosphate + CO2 + H2O. The enzyme catalyses D-ribulose 1,5-bisphosphate + O2 = 2-phosphoglycolate + (2R)-3-phosphoglycerate + 2 H(+). Functionally, ruBisCO catalyzes two reactions: the carboxylation of D-ribulose 1,5-bisphosphate, the primary event in carbon dioxide fixation, as well as the oxidative fragmentation of the pentose substrate in the photorespiration process. Both reactions occur simultaneously and in competition at the same active site. The sequence is that of Ribulose bisphosphate carboxylase large chain from Tropaeolum majus (Common nasturtium).